The primary structure comprises 304 residues: UDP-3-O-acyl-N-acetylglucosamine deacetylase (304 aa).

Zn(2+) is bound by residues histidine 78, histidine 237, and aspartate 241. Catalysis depends on histidine 264, which acts as the Proton donor.

It belongs to the LpxC family. Zn(2+) is required as a cofactor.

It catalyses the reaction a UDP-3-O-[(3R)-3-hydroxyacyl]-N-acetyl-alpha-D-glucosamine + H2O = a UDP-3-O-[(3R)-3-hydroxyacyl]-alpha-D-glucosamine + acetate. It functions in the pathway glycolipid biosynthesis; lipid IV(A) biosynthesis; lipid IV(A) from (3R)-3-hydroxytetradecanoyl-[acyl-carrier-protein] and UDP-N-acetyl-alpha-D-glucosamine: step 2/6. Catalyzes the hydrolysis of UDP-3-O-myristoyl-N-acetylglucosamine to form UDP-3-O-myristoylglucosamine and acetate, the committed step in lipid A biosynthesis. This Legionella pneumophila (strain Lens) protein is UDP-3-O-acyl-N-acetylglucosamine deacetylase.